The chain runs to 319 residues: Aliphatic sulfonates import ATP-binding protein SsuB 1 (319 aa).

The ABC transporter domain occupies 63–282; it reads VTLSGVSKRF…ARASAAFAAL (220 aa). Residue 95–102 participates in ATP binding; the sequence is GRSGCGKS.

The protein belongs to the ABC transporter superfamily. Aliphatic sulfonates importer (TC 3.A.1.17.2) family. In terms of assembly, the complex is composed of two ATP-binding proteins (SsuB), two transmembrane proteins (SsuC) and a solute-binding protein (SsuA).

The protein localises to the cell inner membrane. The enzyme catalyses ATP + H2O + aliphatic sulfonate-[sulfonate-binding protein]Side 1 = ADP + phosphate + aliphatic sulfonateSide 2 + [sulfonate-binding protein]Side 1.. In terms of biological role, part of the ABC transporter complex SsuABC involved in aliphatic sulfonates import. Responsible for energy coupling to the transport system. The polypeptide is Aliphatic sulfonates import ATP-binding protein SsuB 1 (Burkholderia lata (strain ATCC 17760 / DSM 23089 / LMG 22485 / NCIMB 9086 / R18194 / 383)).